Consider the following 280-residue polypeptide: MQEVISYIQKAVLEISNALKFPDTGYSQNQNFTGDTQLKFDVLSDEIITKTLSQCSSIKAIISEEKDEILTLNEKANFIVAYDPLDGSSLMDVNFAIGSIFAIYEEKASAKNLRAALYSMYGARLELVICKDQPKLYRLNANNEFIFIKDLKMNEKGKINATGGTQKFWEEKHAKFIKSLFDEGYRLRYSGAMVSDINQILLKGGGIFSYPATQDAPNGKLRAFFEVFPLAFIIEKAGGKTTNGKNHSLLELEFDKIHATTPCFFGSEYEISKLLKAYNE.

Glu64, Asp83, Leu85, and Asp86 together coordinate Mg(2+). Substrate is bound by residues 86–89 (DGSS), Tyr189, and Lys220. Glu226 contributes to the Mg(2+) binding site.

The protein belongs to the FBPase class 1 family. As to quaternary structure, homotetramer. Mg(2+) serves as cofactor.

Its subcellular location is the cytoplasm. It catalyses the reaction beta-D-fructose 1,6-bisphosphate + H2O = beta-D-fructose 6-phosphate + phosphate. It functions in the pathway carbohydrate biosynthesis; gluconeogenesis. The protein is Fructose-1,6-bisphosphatase class 1 of Campylobacter jejuni subsp. jejuni serotype O:23/36 (strain 81-176).